A 622-amino-acid chain; its full sequence is Mitochondrial distribution and morphology protein 34 (622 aa).

The SMP-LTD domain maps to 1-195 (MAFNFNWSPL…LPAIIHRLSL (195 aa)). 6 disordered regions span residues 211–234 (QVTNPPLEGPGLDPLLNPPEDPVD), 303–322 (PSGLVSPMSPPLSRTHSHVA), 355–432 (SMGA…IRQP), 445–464 (ERNARRGIPAEFGHDIPASR), 482–546 (SLQQ…QTHL), and 581–622 (KMGG…AYRH). Over residues 214–225 (NPPLEGPGLDPL) the composition is skewed to low complexity. Residues 360–372 (RHSKAHARKRKKR) are compositionally biased toward basic residues. Basic and acidic residues predominate over residues 373–384 (VVDLRRRPKNTD). Residues 388-404 (SVSGESEFTESTSAASV) are compositionally biased toward low complexity. Polar residues-rich tracts occupy residues 482-495 (SLQQQLHPANSKSL) and 522-532 (NASNYTSSGDS). 2 stretches are compositionally biased toward low complexity: residues 533–543 (QQQQQQQQQHQ) and 592–601 (NNKNDNKNNN).

This sequence belongs to the MDM34 family. In terms of assembly, component of the ER-mitochondria encounter structure (ERMES) or MDM complex, composed of MMM1, MDM10, MDM12 and MDM34.

The protein localises to the mitochondrion outer membrane. Functionally, component of the ERMES/MDM complex, which serves as a molecular tether to connect the endoplasmic reticulum (ER) and mitochondria. Components of this complex are involved in the control of mitochondrial shape and protein biogenesis, and function in nonvesicular lipid trafficking between the ER and mitochondria. MDM34 is required for the interaction of the ER-resident membrane protein MMM1 and the outer mitochondrial membrane-resident beta-barrel protein MDM10. In Ajellomyces capsulatus (strain G186AR / H82 / ATCC MYA-2454 / RMSCC 2432) (Darling's disease fungus), this protein is Mitochondrial distribution and morphology protein 34.